The following is a 490-amino-acid chain: 53 kDa membrane antigen A (490 aa).

The N-terminal stretch at 1-16 is a signal peptide; it reads MKKKLFFALLVLILSS. Residue cysteine 17 is the site of N-palmitoyl cysteine attachment. Residue cysteine 17 is the site of S-diacylglycerol cysteine attachment.

The protein localises to the cell membrane. The protein is 53 kDa membrane antigen A (tdpA) of Treponema denticola.